Reading from the N-terminus, the 265-residue chain is Inositol-1-monophosphatase (265 aa).

The Mg(2+) site is built by Glu-69, Asp-87, Ile-89, and Asp-90. Substrate is bound at residue Glu-69. Substrate contacts are provided by residues 89 to 92, Arg-185, and Asp-214; that span reads IDGT. A Mg(2+)-binding site is contributed by Asp-214.

Belongs to the inositol monophosphatase superfamily. Requires Mg(2+) as cofactor.

The catalysed reaction is a myo-inositol phosphate + H2O = myo-inositol + phosphate. It catalyses the reaction a ribonucleoside 5'-phosphate + H2O = a ribonucleoside + phosphate. Functionally, hydrolyzes myo-inositol monophosphate. Catalyzes the dephosphorylation of GMP and IMP. The sequence is that of Inositol-1-monophosphatase from Bacillus subtilis (strain 168).